Here is a 741-residue protein sequence, read N- to C-terminus: DNA ligase (741 aa).

NAD(+) is bound by residues Asp-78–Asp-82, Ser-127–Leu-128, and Glu-161. The active-site N6-AMP-lysine intermediate is Lys-163. NAD(+) contacts are provided by Arg-184, Glu-219, Lys-335, and Lys-359. Cys-464, Cys-467, Cys-482, and Cys-488 together coordinate Zn(2+). Residues Val-662–Ala-741 enclose the BRCT domain.

This sequence belongs to the NAD-dependent DNA ligase family. LigA subfamily. Requires Mg(2+) as cofactor. Mn(2+) serves as cofactor.

It catalyses the reaction NAD(+) + (deoxyribonucleotide)n-3'-hydroxyl + 5'-phospho-(deoxyribonucleotide)m = (deoxyribonucleotide)n+m + AMP + beta-nicotinamide D-nucleotide.. Functionally, DNA ligase that catalyzes the formation of phosphodiester linkages between 5'-phosphoryl and 3'-hydroxyl groups in double-stranded DNA using NAD as a coenzyme and as the energy source for the reaction. It is essential for DNA replication and repair of damaged DNA. In Dinoroseobacter shibae (strain DSM 16493 / NCIMB 14021 / DFL 12), this protein is DNA ligase.